Consider the following 156-residue polypeptide: Protein FAM162A (156 aa).

The tract at residues 37-57 (TNGFCSKPQESPKPPDQHTYS) is disordered. Positions 78 to 104 (RFKKEDEIPETVSFEMLDAAKNKVRVK) are required for proapoptotic activity. The chain crosses the membrane as a helical span at residues 105–122 (ISYVMIALTVAGCVLMVI).

This sequence belongs to the UPF0389 family. Interacts with HSP90AB1; HSP90AB1 is essential for FAM162A mitochondrial localization and pro-apoptotic activity. Interacts with VDAC2; the interaction is probably involved in inducing mitochondrial permeability transition.

The protein resides in the mitochondrion membrane. Its function is as follows. Proposed to be involved in regulation of apoptosis; the exact mechanism may differ between cell types/tissues. May be involved in hypoxia-induced cell death of transformed cells implicating cytochrome C release and caspase activation (such as CASP9) and inducing mitochondrial permeability transition. May be involved in hypoxia-induced cell death of neuronal cells probably by promoting release of AIFM1 from mitochondria to cytoplasm and its translocation to the nucleus; however, the involvement of caspases has been reported conflictingly. This is Protein FAM162A (FAM162A) from Bos taurus (Bovine).